A 425-amino-acid polypeptide reads, in one-letter code: Probable G-protein coupled receptor 63 (425 aa).

Topologically, residues 1-87 (MVVSGVLTAP…VFKSLNLAVQ (87 aa)) are extracellular. Residues Asn22, Asn34, and Asn68 are each glycosylated (N-linked (GlcNAc...) asparagine). A helical membrane pass occupies residues 88–112 (IILSAIMIFILFVSFLGNLVVCLMV). Topologically, residues 113–123 (YQKAAMRSAIN) are cytoplasmic. Residues 124–148 (ILLASLAFADMLLAVLNMPFALVTI) form a helical membrane-spanning segment. The Extracellular segment spans residues 149–165 (LTTRWIFGKFFCRLSAM). A helical membrane pass occupies residues 166 to 190 (FFWLFVIEGVAILLIISIDRFLIIV). Topologically, residues 191–202 (QRQDKLNPYRAK) are cytoplasmic. The helical transmembrane segment at 203–222 (VLIAVSWATAFSVAFPLAVG) threads the bilayer. At 223 to 247 (NPDLQIPSRAPQCVFGYTTNSGYQA) the chain is on the extracellular side. The helical transmembrane segment at 248–272 (YVILISLISFFIPFLVILYSFMGIL) threads the bilayer. At 273–321 (NTLRHNALRIHSYPEGICLSQASKLGLMSLQRPFQMSIDMGFKTRAFTT) the chain is on the cytoplasmic side. A helical transmembrane segment spans residues 322 to 345 (ILILFAVFIVCWAPFTTYSLVATF). Topologically, residues 346-357 (SKHFYYQHNFFE) are extracellular. Residues 358–379 (ISTWLLWLCYLKSALNPLIYYW) traverse the membrane as a helical segment. Topologically, residues 380 to 425 (RIKKFHDACLDMMPKSFKFLPRLPGHTRRRIRPSAVYVCGEHRTVL) are cytoplasmic.

It belongs to the G-protein coupled receptor 1 family. Brain specific.

It is found in the cell membrane. Orphan receptor. May play a role in brain function. This is Probable G-protein coupled receptor 63 (Gpr63) from Mus musculus (Mouse).